A 90-amino-acid polypeptide reads, in one-letter code: Small ribosomal subunit protein uS15c (90 aa).

Belongs to the universal ribosomal protein uS15 family. As to quaternary structure, part of the 30S ribosomal subunit.

Its subcellular location is the plastid. It is found in the chloroplast. This Hordeum vulgare (Barley) protein is Small ribosomal subunit protein uS15c (rps15-A).